The primary structure comprises 373 residues: Gametogenetin-binding protein 1 (373 aa).

Disordered stretches follow at residues 26–113 (VGSK…GSQT) and 237–268 (KAQRPDADAPQFALKDSSPTEERGEREEAVDE). Positions 36 to 49 (NRPLNRSQPSSSPE) are enriched in polar residues. The required for induction of mitochondrial fragmentation stretch occupies residues 226–373 (LYKQLQKSAM…DEMGNWPPPE (148 aa)). The span at 254–263 (SPTEERGERE) shows a compositional bias: basic and acidic residues. The interaction with GGN stretch occupies residues 301-373 (KTFRSTDTVG…DEMGNWPPPE (73 aa)).

Interacts with CCDC159. Interacts with GGN.

The protein localises to the cytoplasm. It is found in the membrane. The protein resides in the golgi apparatus. Its subcellular location is the mitochondrion intermembrane space. In terms of biological role, induces mitochondrial fragmentation, possibly by promoting DNM1L-dependent fission and may play a role in mitochondrial morphogenesis during spermatogenesis. In Rattus norvegicus (Rat), this protein is Gametogenetin-binding protein 1 (Ggnbp1).